Reading from the N-terminus, the 118-residue chain is T cell receptor gamma variable 2 (118 aa).

A signal peptide spans 1–17 (MQWALAVLLAFLSPASQ). Positions 18–118 (KSSNLEGRTK…GVYYCATWDG (101 aa)) constitute an Ig-like domain. C41 and C113 are disulfide-bonded.

In terms of assembly, gamma-delta TR is a heterodimer composed of a gamma and delta chain; disulfide-linked. The gamma-delta TR is associated with the transmembrane signaling CD3 coreceptor proteins following the stoichiometry: a single gamma-delta TR heterodimer associates with one CD3D-CD3E heterodimer, one CD3G-CD3E heterodimer and one CD247 homodimer forming a stable octameric structure. Upon activation, gamma-delta TR complex associates with FCER1G to initiate intracellular signaling.

The protein resides in the cell membrane. Functionally, v region of the variable domain of T cell receptor (TR) gamma chain that participates in the antigen recognition. Gamma-delta TRs recognize a variety of self and foreign non-peptide antigens frequently expressed at the epithelial boundaries between the host and external environment, including endogenous lipids presented by MH-like protein CD1D and phosphoantigens presented by butyrophilin-like molecule BTN3A1. Upon antigen recognition induces rapid, innate-like immune responses involved in pathogen clearance and tissue repair. Binding of gamma-delta TR complex to antigen triggers phosphorylation of immunoreceptor tyrosine-based activation motifs (ITAMs) in the CD3 chains by the LCK and FYN kinases, allowing the recruitment, phosphorylation, and activation of ZAP70 that facilitates phosphorylation of the scaffolding proteins LCP2 and LAT. This lead to the formation of a supramolecular signalosome that recruits the phospholipase PLCG1, resulting in calcium mobilization and ERK activation, ultimately leading to T cell expansion and differentiation into effector cells. Gamma-delta TRs are produced through somatic rearrangement of a limited repertoire of variable (V), diversity (D), and joining (J) genes. The potential diversity of gamma-delta TRs is conferred by the unique ability to rearrange (D) genes in tandem and to utilize all three reading frames. The combinatorial diversity is considerably increased by the sequence exonuclease trimming and random nucleotide (N) region additions which occur during the V-(D)-J rearrangements. This Homo sapiens (Human) protein is T cell receptor gamma variable 2.